We begin with the raw amino-acid sequence, 274 residues long: Acyl-[acyl-carrier-protein]--UDP-N-acetylglucosamine O-acyltransferase (274 aa).

It belongs to the transferase hexapeptide repeat family. LpxA subfamily. As to quaternary structure, homotrimer.

It localises to the cytoplasm. It catalyses the reaction a (3R)-hydroxyacyl-[ACP] + UDP-N-acetyl-alpha-D-glucosamine = a UDP-3-O-[(3R)-3-hydroxyacyl]-N-acetyl-alpha-D-glucosamine + holo-[ACP]. It participates in glycolipid biosynthesis; lipid IV(A) biosynthesis; lipid IV(A) from (3R)-3-hydroxytetradecanoyl-[acyl-carrier-protein] and UDP-N-acetyl-alpha-D-glucosamine: step 1/6. Involved in the biosynthesis of lipid A, a phosphorylated glycolipid that anchors the lipopolysaccharide to the outer membrane of the cell. The polypeptide is Acyl-[acyl-carrier-protein]--UDP-N-acetylglucosamine O-acyltransferase (Bartonella bacilliformis (strain ATCC 35685 / KC583 / Herrer 020/F12,63)).